Reading from the N-terminus, the 419-residue chain is L-rhamnose isomerase (419 aa).

Residues H262, D294, and D296 each coordinate Mn(2+).

The protein belongs to the rhamnose isomerase family. As to quaternary structure, homotetramer. Requires Mn(2+) as cofactor.

It localises to the cytoplasm. It carries out the reaction L-rhamnopyranose = L-rhamnulose. It functions in the pathway carbohydrate degradation; L-rhamnose degradation; glycerone phosphate from L-rhamnose: step 1/3. Functionally, catalyzes the interconversion of L-rhamnose and L-rhamnulose. This is L-rhamnose isomerase from Enterobacter sp. (strain 638).